A 337-amino-acid chain; its full sequence is uncharacterized protein (337 aa).

Residues 1 to 11 (MSEIEEEEEEG) are compositionally biased toward acidic residues. Residues 1-20 (MSEIEEEEEEGSASAITGSR) are disordered. Residue S2 is modified to N-acetylserine. A coiled-coil region spans residues 50–130 (ALSTRVSALE…LQRDVSKLEG (81 aa)). Positions 139-242 (LQDDDQNAGT…PISPRRHSVS (104 aa)) are disordered. Positions 170–182 (SSIQSQQASEAIE) are enriched in low complexity. Residues 197–211 (LSASLPLVSQTTTPR) show a composition bias toward polar residues. The residue at position 213 (T213) is a Phosphothreonine. S217 is subject to Phosphoserine. Residues 223–233 (ASGTPKTTSRP) show a composition bias toward polar residues. T226 is modified (phosphothreonine). S235 carries the post-translational modification Phosphoserine.

This is an uncharacterized protein from Arabidopsis thaliana (Mouse-ear cress).